The following is a 146-amino-acid chain: MVMGLGLFLLVFMLGLGLTPPTLAQDNSRYRDFLTKHYDATPQGRNDRYCESMMRRRGLTSPCKDINTFIHGNSRHIKAICGDENGNPYRENLRISKSPFQVTTCNLRGGSPWPPCRYRATAGFRNIVVACENDLPVHLDQSIFHP.

Residues 1 to 24 form the signal peptide; sequence MVMGLGLFLLVFMLGLGLTPPTLA. The residue at position 25 (Q25) is a Pyrrolidone carboxylic acid. The active-site Proton acceptor is H37. R45 contributes to the tRNA binding site. 3 disulfide bridges follow: C50-C105, C63-C116, and C81-C131. Positions 55–59 match the Nucleolar localization signal motif; sequence RRRGL. Residues C105 and I127 each contribute to the tRNA site. H138 functions as the Proton donor in the catalytic mechanism.

This sequence belongs to the pancreatic ribonuclease family. In terms of assembly, homodimer. Interacts with RNH1; inhibiting ANG ribonuclease activity. Interacts with PCNA.

It is found in the secreted. It localises to the nucleus. The protein resides in the nucleolus. Its subcellular location is the cytoplasm. The protein localises to the stress granule. Its activity is regulated as follows. Has weak tRNA ribonuclease activity by itself due to partial autoinhibition by its C-terminus, which folds into a short alpha-helix that partially occludes the substrate-binding site. In absence of stress, the ribonuclease activity is inhibited by RNH1 in the cytoplasm. In response to stress, dissociates from RNH1 in the cytoplasm and associates with cytoplasmic ribosomes with vacant A-sites: ribosomes directly activate the tRNA ribonuclease activity of ANG by refolding the C-terminal alpha-helix. In response to stress, the angiogenic activity of ANG is inhibited by RNH1 in the nucleus. In terms of biological role, secreted ribonuclease that can either promote or restrict cell proliferation of target cells, depending on the context. Endocytosed in target cells via its receptor PLXNB2 and translocates to the cytoplasm or nucleus. Under stress conditions, localizes to the cytoplasm and promotes the assembly of stress granules (SGs): specifically cleaves a subset of tRNAs within anticodon loops to produce tRNA-derived stress-induced fragments (tiRNAs), resulting in translation repression and inhibition of cell proliferation. tiRNas also prevent formation of apoptosome, thereby promoting cell survival. Preferentially cleaves RNAs between a pyrimidine and an adenosine residue, suggesting that it cleaves the anticodon loop of tRNA(Ala) (32-UUAGCAU-38) after positions 33 and 36. Cleaves a subset of tRNAs, including tRNA(Ala), tRNA(Glu), tRNA(Gly), tRNA(Lys), tRNA(Val), tRNA(His), tRNA(Asp) and tRNA(Sec). Under growth conditions and in differentiated cells, translocates to the nucleus and stimulates ribosomal RNA (rRNA) transcription, including that containing the initiation site sequences of 45S rRNA, thereby promoting cell growth and proliferation. Angiogenin induces vascularization of normal and malignant tissues via its ability to promote rRNA transcription. Involved in hematopoietic stem and progenitor cell (HSPC) growth and survival by promoting rRNA transcription in growth conditions and inhibiting translation in response to stress, respectively. Mediates the crosstalk between myeloid and intestinal epithelial cells to protect the intestinal epithelial barrier integrity: secreted by myeloid cells and promotes intestinal epithelial cells proliferation and survival. Also mediates osteoclast-endothelial cell crosstalk in growing bone: produced by osteoclasts and protects the neighboring vascular cells against senescence by promoting rRNA transcription. The polypeptide is Angiogenin (ANG) (Trachypithecus francoisi (Francois' leaf monkey)).